Consider the following 359-residue polypeptide: DNA polymerase IV (359 aa).

Residues I7–G188 form the UmuC domain. Mg(2+) is bound by residues D11 and D106. E107 is a catalytic residue.

This sequence belongs to the DNA polymerase type-Y family. As to quaternary structure, monomer. Requires Mg(2+) as cofactor.

It is found in the cytoplasm. The catalysed reaction is DNA(n) + a 2'-deoxyribonucleoside 5'-triphosphate = DNA(n+1) + diphosphate. In terms of biological role, poorly processive, error-prone DNA polymerase involved in untargeted mutagenesis. Copies undamaged DNA at stalled replication forks, which arise in vivo from mismatched or misaligned primer ends. These misaligned primers can be extended by PolIV. Exhibits no 3'-5' exonuclease (proofreading) activity. May be involved in translesional synthesis, in conjunction with the beta clamp from PolIII. The sequence is that of DNA polymerase IV from Clostridium perfringens (strain 13 / Type A).